The chain runs to 340 residues: Uroporphyrinogen decarboxylase (340 aa).

Residues R21–R25, D71, Y148, S203, and H316 each bind substrate.

This sequence belongs to the uroporphyrinogen decarboxylase family. In terms of assembly, homodimer.

The protein resides in the cytoplasm. It carries out the reaction uroporphyrinogen III + 4 H(+) = coproporphyrinogen III + 4 CO2. Its pathway is porphyrin-containing compound metabolism; protoporphyrin-IX biosynthesis; coproporphyrinogen-III from 5-aminolevulinate: step 4/4. In terms of biological role, catalyzes the decarboxylation of four acetate groups of uroporphyrinogen-III to yield coproporphyrinogen-III. This chain is Uroporphyrinogen decarboxylase, found in Campylobacter jejuni (strain RM1221).